Consider the following 139-residue polypeptide: Transcription antitermination protein NusB (139 aa).

It belongs to the NusB family.

Involved in transcription antitermination. Required for transcription of ribosomal RNA (rRNA) genes. Binds specifically to the boxA antiterminator sequence of the ribosomal RNA (rrn) operons. The sequence is that of Transcription antitermination protein NusB from Sodalis glossinidius (strain morsitans).